Here is a 180-residue protein sequence, read N- to C-terminus: ATP-dependent protease subunit HslV (180 aa).

Residue Thr-6 is part of the active site. Residues Ala-164, Cys-167, and Thr-170 each coordinate Na(+).

The protein belongs to the peptidase T1B family. HslV subfamily. A double ring-shaped homohexamer of HslV is capped on each side by a ring-shaped HslU homohexamer. The assembly of the HslU/HslV complex is dependent on binding of ATP.

The protein localises to the cytoplasm. The enzyme catalyses ATP-dependent cleavage of peptide bonds with broad specificity.. With respect to regulation, allosterically activated by HslU binding. Functionally, protease subunit of a proteasome-like degradation complex believed to be a general protein degrading machinery. This chain is ATP-dependent protease subunit HslV, found in Borrelia duttonii (strain Ly).